The sequence spans 553 residues: Keratin, type II cytoskeletal 73 (553 aa).

The tract at residues 1-130 (MNRQFTCKSG…DPEIQKVRAQ (130 aa)) is head. Positions 131 to 166 (EREQIKALNNKFASFIDKVRFLEQQNQVLQTKWELL) are coil 1A. The IF rod domain maps to 131–444 (EREQIKALNN…KLLEGEECRM (314 aa)). Positions 167 to 185 (QQLDLSNCRRNLEPVYEAH) are linker 1. The coil 1B stretch occupies residues 186 to 277 (ISSLQKQLDS…CLYEGEITQM (92 aa)). The linker 12 stretch occupies residues 278 to 301 (QSHISDTSVVLSMDNNRNLDLDSI). The segment at 302-440 (IAEVRAQYED…ATYRKLLEGE (139 aa)) is coil 2. The tail stretch occupies residues 441–539 (ECRMSGEHTN…LGSPSKKTMR (99 aa)).

It belongs to the intermediate filament family. As to quaternary structure, heterotetramer of two type I and two type II keratins.

Its function is as follows. Has a role in hair formation. Specific component of keratin intermediate filaments in the inner root sheath (IRS) of the hair follicle. In Rattus norvegicus (Rat), this protein is Keratin, type II cytoskeletal 73 (Krt73).